We begin with the raw amino-acid sequence, 202 residues long: MSALETQALGMIPMVIEQSGRGERSYDIYSRLLKERVIFLVGEVNDQTANLVVAQLLFLESENPDKDISFYINSPGGSVTAGMAIYDTMQFIKPDVSTLCCGFAASMGAFLLAAGAKGKRYSLPNSKIMIHQVLGGARGQATDIEIHARDILRTKDQMNRILAERTGQPIEKVKADTERDYFMTADEAKDYGIVDQVIAKRP.

The active-site Nucleophile is the S106. The active site involves H131.

The protein belongs to the peptidase S14 family. As to quaternary structure, fourteen ClpP subunits assemble into 2 heptameric rings which stack back to back to give a disk-like structure with a central cavity, resembling the structure of eukaryotic proteasomes.

It is found in the cytoplasm. It carries out the reaction Hydrolysis of proteins to small peptides in the presence of ATP and magnesium. alpha-casein is the usual test substrate. In the absence of ATP, only oligopeptides shorter than five residues are hydrolyzed (such as succinyl-Leu-Tyr-|-NHMec, and Leu-Tyr-Leu-|-Tyr-Trp, in which cleavage of the -Tyr-|-Leu- and -Tyr-|-Trp bonds also occurs).. Functionally, cleaves peptides in various proteins in a process that requires ATP hydrolysis. Has a chymotrypsin-like activity. Plays a major role in the degradation of misfolded proteins. This Acidovorax ebreus (strain TPSY) (Diaphorobacter sp. (strain TPSY)) protein is ATP-dependent Clp protease proteolytic subunit.